Reading from the N-terminus, the 902-residue chain is Protein translocase subunit SecA (902 aa).

Residues Q87, 105-109, and D512 contribute to the ATP site; that span reads GEGKT. Residues 847–902 form a disordered region; sequence DAERLARQQQLSHLDDQSAAAQEMASQTGDRKIGRNDPCPCGSGKKYKQCHGRLNA. The Zn(2+) site is built by C885, C887, C896, and H897. Residues 891–902 show a composition bias toward basic residues; it reads KKYKQCHGRLNA.

This sequence belongs to the SecA family. As to quaternary structure, monomer and homodimer. Part of the essential Sec protein translocation apparatus which comprises SecA, SecYEG and auxiliary proteins SecDF-YajC and YidC. Requires Zn(2+) as cofactor.

Its subcellular location is the cell inner membrane. It is found in the cytoplasm. The enzyme catalyses ATP + H2O + cellular proteinSide 1 = ADP + phosphate + cellular proteinSide 2.. In terms of biological role, part of the Sec protein translocase complex. Interacts with the SecYEG preprotein conducting channel. Has a central role in coupling the hydrolysis of ATP to the transfer of proteins into and across the cell membrane, serving both as a receptor for the preprotein-SecB complex and as an ATP-driven molecular motor driving the stepwise translocation of polypeptide chains across the membrane. This Edwardsiella ictaluri (strain 93-146) protein is Protein translocase subunit SecA.